A 350-amino-acid chain; its full sequence is Heme A synthase (350 aa).

8 helical membrane passes run 14–34 (VAIW…IGGF), 95–115 (YVHR…FIYF), 125–145 (VVIK…AGWY), 162–182 (LALH…QFFD), 202–222 (VGII…VAGL), 260–280 (VQFI…ILTV), 296–316 (IIQI…AIAI), and 317–337 (AHQV…CYLR). Histidine 264 provides a ligand contact to heme. Residue histidine 318 coordinates heme.

Belongs to the COX15/CtaA family. Type 2 subfamily. As to quaternary structure, interacts with CtaB. The cofactor is heme b.

The protein resides in the cell membrane. The catalysed reaction is Fe(II)-heme o + 2 A + H2O = Fe(II)-heme a + 2 AH2. Its pathway is porphyrin-containing compound metabolism; heme A biosynthesis; heme A from heme O: step 1/1. Its function is as follows. Catalyzes the conversion of heme O to heme A by two successive hydroxylations of the methyl group at C8. The first hydroxylation forms heme I, the second hydroxylation results in an unstable dihydroxymethyl group, which spontaneously dehydrates, resulting in the formyl group of heme A. The polypeptide is Heme A synthase (Wolbachia pipientis wMel).